We begin with the raw amino-acid sequence, 290 residues long: tRNA dimethylallyltransferase (290 aa).

11-18 (GPTASGKS) contacts ATP. 13–18 (TASGKS) is a binding site for substrate. 2 interaction with substrate tRNA regions span residues 36–39 (DSMQ) and 158–162 (QRIVR).

The protein belongs to the IPP transferase family. As to quaternary structure, monomer. It depends on Mg(2+) as a cofactor.

It catalyses the reaction adenosine(37) in tRNA + dimethylallyl diphosphate = N(6)-dimethylallyladenosine(37) in tRNA + diphosphate. In terms of biological role, catalyzes the transfer of a dimethylallyl group onto the adenine at position 37 in tRNAs that read codons beginning with uridine, leading to the formation of N6-(dimethylallyl)adenosine (i(6)A). This is tRNA dimethylallyltransferase from Bartonella tribocorum (strain CIP 105476 / IBS 506).